The sequence spans 258 residues: UPF0246 protein VV1_0535 (258 aa).

Belongs to the UPF0246 family.

This Vibrio vulnificus (strain CMCP6) protein is UPF0246 protein VV1_0535.